A 194-amino-acid polypeptide reads, in one-letter code: MSPITILLIGIAMSTDAFAAAIGKGAAIGKPRLRDALYVAVIFGVIETATPIAGWLLGQIASHYIATFDHWIAFGLLSGLGIHMIVNGLKNNGNTCKDNADTHNRNSRWLPLAATALATSIDAAAIGISLAFLDIHISIVAAVIGLCTFTMVIFGVMLGRVLGTFVGNRAEIVGGIILIIVGSTILYEHLSNNG.

The next 6 membrane-spanning stretches (helical) occupy residues proline 3–glycine 23, leucine 37–leucine 57, isoleucine 65–isoleucine 85, leucine 112–phenylalanine 132, isoleucine 139–glycine 159, and alanine 170–leucine 190.

Belongs to the MntP (TC 9.B.29) family.

It is found in the cell inner membrane. Probably functions as a manganese efflux pump. The protein is Putative manganese efflux pump MntP of Xylella fastidiosa (strain 9a5c).